A 107-amino-acid chain; its full sequence is Benzene 1,2-dioxygenase system ferredoxin subunit (107 aa).

Residues 4–99 (TYILRQSDLP…IKVEGDEVHV (96 aa)) form the Rieske domain. Residues C43, H45, C62, and H65 each coordinate [2Fe-2S] cluster.

Belongs to the bacterial ring-hydroxylating dioxygenase ferredoxin component family. In terms of assembly, this dioxygenase system consists of four proteins: the two subunits of the hydroxylase component (BnzA and BnzB), a ferredoxin (BnzC) and a ferredoxin reductase (BnzD).

The protein operates within aromatic compound metabolism; benzene degradation; catechol from benzene: step 1/2. This protein seems to be a 2Fe-2S ferredoxin. In Pseudomonas putida (Arthrobacter siderocapsulatus), this protein is Benzene 1,2-dioxygenase system ferredoxin subunit (bnzC).